A 405-amino-acid polypeptide reads, in one-letter code: Dynactin subunit 2 (405 aa).

Positions 1–24 are disordered; sequence MADPKYADLPGIARNEPDVYETSD. Residues 101–134 are a coiled coil; sequence PQQKYQRLLHEIQELTQEVEKAQSTVKESAAEEK. Residues 186–207 form a disordered region; it reads AKTRKNPEGKSPAKGPGPDNEN. The stretch at 383–403 forms a coiled coil; the sequence is KENLATVEDNFTSIDARIKKL.

It belongs to the dynactin subunit 2 family. Subunit of dynactin, a multiprotein complex part of a tripartite complex with dynein and a adapter, such as BICDL1, BICD2 or HOOK3. The dynactin complex is built around ACTR1A/ACTB filament and consists of an actin-related filament composed of a shoulder domain, a pointed end and a barbed end. Its length is defined by its flexible shoulder domain. The soulder is composed of 2 DCTN1 subunits, 4 DCTN2 and 2 DCTN3.

The protein resides in the cytoplasm. It localises to the cytoskeleton. The protein localises to the microtubule organizing center. It is found in the centrosome. Its subcellular location is the membrane. Its function is as follows. Part of the dynactin complex that activates the molecular motor dynein for ultra-processive transport along microtubules. In the dynactin soulder domain, binds the ACTR1A filament and acts as a molecular ruler to determine the length. Modulates cytoplasmic dynein binding to an organelle, and plays a role in prometaphase chromosome alignment and spindle organization during mitosis. Involved in anchoring microtubules to centrosomes. In Xenopus tropicalis (Western clawed frog), this protein is Dynactin subunit 2 (dctn2).